The primary structure comprises 153 residues: Large ribosomal subunit protein uL13 (153 aa).

The disordered stretch occupies residues 128-153 (SEHPHEAQSPEVLDVTSMNSKNTRSA). Polar residues predominate over residues 143 to 153 (TSMNSKNTRSA).

It belongs to the universal ribosomal protein uL13 family. Part of the 50S ribosomal subunit.

Its function is as follows. This protein is one of the early assembly proteins of the 50S ribosomal subunit, although it is not seen to bind rRNA by itself. It is important during the early stages of 50S assembly. This Roseobacter denitrificans (strain ATCC 33942 / OCh 114) (Erythrobacter sp. (strain OCh 114)) protein is Large ribosomal subunit protein uL13.